The following is a 474-amino-acid chain: tRNA-2-methylthio-N(6)-dimethylallyladenosine synthase (474 aa).

The MTTase N-terminal domain maps to 3 to 120; the sequence is KKLLIKTWGC…LPQMIKDSQS (118 aa). [4Fe-4S] cluster-binding residues include Cys-12, Cys-49, Cys-83, Cys-157, Cys-161, and Cys-164. The region spanning 143-375 is the Radical SAM core domain; sequence RADGVTAFVS…QQQINTQAMR (233 aa). Residues 378–441 form the TRAM domain; that stretch reads RQMLNTEQRI…TNSLRGELVR (64 aa).

The protein belongs to the methylthiotransferase family. MiaB subfamily. As to quaternary structure, monomer. [4Fe-4S] cluster serves as cofactor.

The protein localises to the cytoplasm. The catalysed reaction is N(6)-dimethylallyladenosine(37) in tRNA + (sulfur carrier)-SH + AH2 + 2 S-adenosyl-L-methionine = 2-methylsulfanyl-N(6)-dimethylallyladenosine(37) in tRNA + (sulfur carrier)-H + 5'-deoxyadenosine + L-methionine + A + S-adenosyl-L-homocysteine + 2 H(+). Catalyzes the methylthiolation of N6-(dimethylallyl)adenosine (i(6)A), leading to the formation of 2-methylthio-N6-(dimethylallyl)adenosine (ms(2)i(6)A) at position 37 in tRNAs that read codons beginning with uridine. This Photobacterium profundum (strain SS9) protein is tRNA-2-methylthio-N(6)-dimethylallyladenosine synthase.